Here is a 179-residue protein sequence, read N- to C-terminus: Acireductone dioxygenase (179 aa).

Residues His-100, His-102, Glu-106, and His-145 each coordinate Fe(2+). Ni(2+) is bound by residues His-100, His-102, Glu-106, and His-145.

The protein belongs to the acireductone dioxygenase (ARD) family. Monomer. The cofactor is Fe(2+). Ni(2+) is required as a cofactor.

The enzyme catalyses 1,2-dihydroxy-5-(methylsulfanyl)pent-1-en-3-one + O2 = 3-(methylsulfanyl)propanoate + CO + formate + 2 H(+). It carries out the reaction 1,2-dihydroxy-5-(methylsulfanyl)pent-1-en-3-one + O2 = 4-methylsulfanyl-2-oxobutanoate + formate + 2 H(+). The protein operates within amino-acid biosynthesis; L-methionine biosynthesis via salvage pathway; L-methionine from S-methyl-5-thio-alpha-D-ribose 1-phosphate: step 5/6. Its function is as follows. Catalyzes 2 different reactions between oxygen and the acireductone 1,2-dihydroxy-3-keto-5-methylthiopentene (DHK-MTPene) depending upon the metal bound in the active site. Fe-containing acireductone dioxygenase (Fe-ARD) produces formate and 2-keto-4-methylthiobutyrate (KMTB), the alpha-ketoacid precursor of methionine in the methionine recycle pathway. Ni-containing acireductone dioxygenase (Ni-ARD) produces methylthiopropionate, carbon monoxide and formate, and does not lie on the methionine recycle pathway. The chain is Acireductone dioxygenase from Bacillus licheniformis (strain ATCC 14580 / DSM 13 / JCM 2505 / CCUG 7422 / NBRC 12200 / NCIMB 9375 / NCTC 10341 / NRRL NRS-1264 / Gibson 46).